A 60-amino-acid polypeptide reads, in one-letter code: Large ribosomal subunit protein bL32 (60 aa).

The segment covering 1–16 (MAVPKRKTSPSKRGMR) has biased composition (basic residues). The segment at 1–60 (MAVPKRKTSPSKRGMRRSADALKAPTYVEDKNSGEMRRPHHIDLKTGMYRGRQVLTPKES) is disordered. Basic and acidic residues predominate over residues 28 to 44 (VEDKNSGEMRRPHHIDL).

This sequence belongs to the bacterial ribosomal protein bL32 family.

In Mesorhizobium japonicum (strain LMG 29417 / CECT 9101 / MAFF 303099) (Mesorhizobium loti (strain MAFF 303099)), this protein is Large ribosomal subunit protein bL32.